The sequence spans 368 residues: uncharacterized protein (368 aa).

The interval 237 to 287 is disordered; it reads ESLSIPSRRRPSSIAPIGTRPSRKEIAFSNSSTPTDQTLRPPNPPAANGNA. Positions 238–253 are enriched in low complexity; the sequence is SLSIPSRRRPSSIAPI. Residues 264 to 276 show a composition bias toward polar residues; that stretch reads FSNSSTPTDQTLR.

This is an uncharacterized protein from Schizosaccharomyces pombe (strain 972 / ATCC 24843) (Fission yeast).